Reading from the N-terminus, the 65-residue chain is Large ribosomal subunit protein uL30 (65 aa).

The protein belongs to the universal ribosomal protein uL30 family. Part of the 50S ribosomal subunit.

The polypeptide is Large ribosomal subunit protein uL30 (Desulfosudis oleivorans (strain DSM 6200 / JCM 39069 / Hxd3) (Desulfococcus oleovorans)).